The chain runs to 37 residues: Esculentin-2HSa (37 aa).

Cysteines 31 and 37 form a disulfide.

In terms of tissue distribution, expressed by the skin glands.

The protein resides in the secreted. Functionally, has antibacterial activity against the Gram-positive bacterium S.aureus ATCC 25923 (MIC=32 uM) and the Gram-negative bacterium E.coli ATCC 25726 (MIC=16 uM). This is Esculentin-2HSa from Odorrana hosii (Hose's rock frog).